The sequence spans 37 residues: Potassium channel toxin alpha-KTx 3.9 (37 aa).

3 cysteine pairs are disulfide-bonded: Cys7–Cys27, Cys13–Cys32, and Cys17–Cys34. An interaction with Ca(2+)-activated K(+) channels region spans residues 25-32 (GKCMNRKC).

The protein belongs to the short scorpion toxin superfamily. Potassium channel inhibitor family. Alpha-KTx 03 subfamily. In terms of tissue distribution, expressed by the venom gland.

It localises to the secreted. Its function is as follows. Binds and inhibits potassium channels. Intracerebroventricular injection into mice induces paralyzing symptoms followed by death. Its binding affinity to rat brain synaptosomes is 5-fold lower than this of KTX 1. The polypeptide is Potassium channel toxin alpha-KTx 3.9 (KTX3) (Buthus occitanus tunetanus (Common European scorpion)).